Consider the following 78-residue polypeptide: Large ribosomal subunit protein bL28 (78 aa).

This sequence belongs to the bacterial ribosomal protein bL28 family.

In Corynebacterium aurimucosum (strain ATCC 700975 / DSM 44827 / CIP 107346 / CN-1) (Corynebacterium nigricans), this protein is Large ribosomal subunit protein bL28.